The sequence spans 177 residues: ATP synthase subunit delta (177 aa).

This sequence belongs to the ATPase delta chain family. As to quaternary structure, F-type ATPases have 2 components, F(1) - the catalytic core - and F(0) - the membrane proton channel. F(1) has five subunits: alpha(3), beta(3), gamma(1), delta(1), epsilon(1). F(0) has three main subunits: a(1), b(2) and c(10-14). The alpha and beta chains form an alternating ring which encloses part of the gamma chain. F(1) is attached to F(0) by a central stalk formed by the gamma and epsilon chains, while a peripheral stalk is formed by the delta and b chains.

Its subcellular location is the cell inner membrane. Its function is as follows. F(1)F(0) ATP synthase produces ATP from ADP in the presence of a proton or sodium gradient. F-type ATPases consist of two structural domains, F(1) containing the extramembraneous catalytic core and F(0) containing the membrane proton channel, linked together by a central stalk and a peripheral stalk. During catalysis, ATP synthesis in the catalytic domain of F(1) is coupled via a rotary mechanism of the central stalk subunits to proton translocation. Functionally, this protein is part of the stalk that links CF(0) to CF(1). It either transmits conformational changes from CF(0) to CF(1) or is implicated in proton conduction. The protein is ATP synthase subunit delta of Colwellia psychrerythraea (strain 34H / ATCC BAA-681) (Vibrio psychroerythus).